The chain runs to 880 residues: MTDSIQSSITPVNIEEELKSSYLDYAMSVIVGRALPDVRDGLKPVHRRVLFSMDREGNTANKKYVKSARVVGDVIGKYHPHGDSAVYDTIVRMAQPFSLRYMLVDGQGNFGSIDGDAPAAMRYTEVRMQKITQALLTDLDKETVNFSPNYDGELMIPDVLPTRIPALLANGSSGIAVGMATNIPPHNLNEVLNGCLAYIDKNEITIDELMQHIPGPDFPTAALINGRKGIEEAYRTGRGKVYVRARATVETNEKGREQIIVSELPYQVNKAKLVEKIAELIREKKIEGISNITDLSNKEGIRIEIDIKRDAVGEVVLNHLYSLTQMQVTFGINMVALDHGQPRLFNLKEIIEAFVLHRREVVTRRSIFELRKARERTHILEGLAVARSNIDEMIAIIRNSKNREEAATSISSRSWTLHSDIINLLDASARPDELEENLGIQGEQYYLSPAQVNAILELRLHRLTGIAFEEVIKEYEELLVKIADLLHILSSAERLMEVIREELEEVKAQFGDDRLTEITAASGDIDLEDLIAQEDVVVTLSHEGYVKYQPLTDYEAQRRGGKGKSATKMKEEDFIEKLLVANTHDTILCFSSRGRLYWLKVYQLPQASRGARGRPIVNILPLQENERITAILPVSAYEEDKFVVMATAGGIVKKIALTEFSRPRSNGIIALNLRDEDELIGVDITDGSNEIMLFSSQGRVVRFAENAVRAMGRLATGVRGIKLALTNDISDDESAVEIEDISDDNAEASLDLNIDKVVSLVVPKGEGAILTATQNGYGKRTQLSEYPTKSRNTKGVISIKVSERNGKVVAATQVEETDQIMLITDAGTLVRTRVSEVSIVGRNTQGVRLIRTADDEHVVSLERVCDADEDDSLEESSSEE.

In terms of domain architecture, Topo IIA-type catalytic spans 35–530; sequence LPDVRDGLKP…ASGDIDLEDL (496 aa). Tyrosine 123 serves as the catalytic O-(5'-phospho-DNA)-tyrosine intermediate. The short motif at 557-563 is the GyrA-box element; it reads QRRGGKG.

Belongs to the type II topoisomerase GyrA/ParC subunit family. Heterotetramer, composed of two GyrA and two GyrB chains. In the heterotetramer, GyrA contains the active site tyrosine that forms a transient covalent intermediate with DNA, while GyrB binds cofactors and catalyzes ATP hydrolysis.

The protein localises to the cytoplasm. It carries out the reaction ATP-dependent breakage, passage and rejoining of double-stranded DNA.. A type II topoisomerase that negatively supercoils closed circular double-stranded (ds) DNA in an ATP-dependent manner to modulate DNA topology and maintain chromosomes in an underwound state. Negative supercoiling favors strand separation, and DNA replication, transcription, recombination and repair, all of which involve strand separation. Also able to catalyze the interconversion of other topological isomers of dsDNA rings, including catenanes and knotted rings. Type II topoisomerases break and join 2 DNA strands simultaneously in an ATP-dependent manner. The sequence is that of DNA gyrase subunit A from Haemophilus influenzae (strain ATCC 51907 / DSM 11121 / KW20 / Rd).